A 341-amino-acid polypeptide reads, in one-letter code: Ribonucleoside-diphosphate reductase small chain A (341 aa).

Residues 1 to 20 (MGSLKEGQGRDMEEGESEEP) are disordered. Aspartate 87, glutamate 118, and histidine 121 together coordinate Fe cation. Tyrosine 125 is an active-site residue. Residues glutamate 180, glutamate 214, and histidine 217 each contribute to the Fe cation site.

This sequence belongs to the ribonucleoside diphosphate reductase small chain family. Homodimer and heterodimer with TSO2. Heterotetramer of two R1 and two R2 chains. A radical transfer pathway may occur between Tyr-125 of protein R2 and R1. Homodimer contains a dinuclear non-heme iron center and a stable tyrosyl radical essential for activity. A transfer pathway may occur between Tyr-125 of protein R2 and R1. Interacts with CSN7. It depends on Fe cation as a cofactor. As to expression, expressed in rosette leaves, cauline leaves, stems and flowers.

The protein localises to the cytoplasm. The catalysed reaction is a 2'-deoxyribonucleoside 5'-diphosphate + [thioredoxin]-disulfide + H2O = a ribonucleoside 5'-diphosphate + [thioredoxin]-dithiol. With respect to regulation, inhibited by phenol, paracetamol, 2,4,6-trimethylphenol, resveratrol, furfuryl mercaptan, 2-thiophenthiol, phenylhydrazine, and hydroxyurea. Its function is as follows. Provides the precursors necessary for DNA synthesis. Catalyzes the biosynthesis of deoxyribonucleotides from the corresponding ribonucleotides. The chain is Ribonucleoside-diphosphate reductase small chain A (RNR2A) from Arabidopsis thaliana (Mouse-ear cress).